Here is a 91-residue protein sequence, read N- to C-terminus: UPF0298 protein M28_Spy0318 (91 aa).

This sequence belongs to the UPF0298 family.

It is found in the cytoplasm. This Streptococcus pyogenes serotype M28 (strain MGAS6180) protein is UPF0298 protein M28_Spy0318.